Here is a 601-residue protein sequence, read N- to C-terminus: Phosphomethylpyrimidine synthase (601 aa).

Disordered regions lie at residues 1–31 (MTNKDARTPASSQTGEALASPQGDQEAGKSI) and 100–141 (AGRP…RDGQ). Over residues 100–112 (AGRPVRPEDDGIK) the composition is skewed to basic and acidic residues. Substrate-binding positions include Asn-208, Met-237, Tyr-266, His-302, 322-324 (SRG), 363-366 (DGLR), and Glu-402. Zn(2+) is bound at residue His-406. A substrate-binding site is contributed by Tyr-429. His-470 serves as a coordination point for Zn(2+). Residues Cys-550, Cys-553, and Cys-558 each contribute to the [4Fe-4S] cluster site.

This sequence belongs to the ThiC family. [4Fe-4S] cluster is required as a cofactor.

The catalysed reaction is 5-amino-1-(5-phospho-beta-D-ribosyl)imidazole + S-adenosyl-L-methionine = 4-amino-2-methyl-5-(phosphooxymethyl)pyrimidine + CO + 5'-deoxyadenosine + formate + L-methionine + 3 H(+). It functions in the pathway cofactor biosynthesis; thiamine diphosphate biosynthesis. Catalyzes the synthesis of the hydroxymethylpyrimidine phosphate (HMP-P) moiety of thiamine from aminoimidazole ribotide (AIR) in a radical S-adenosyl-L-methionine (SAM)-dependent reaction. This Streptomyces avermitilis (strain ATCC 31267 / DSM 46492 / JCM 5070 / NBRC 14893 / NCIMB 12804 / NRRL 8165 / MA-4680) protein is Phosphomethylpyrimidine synthase.